The following is a 650-amino-acid chain: Probable protein phosphatase 2C 36 (650 aa).

The disordered stretch occupies residues Ser-146–Lys-166. The segment covering Lys-148–Lys-166 has biased composition (basic residues). The 403-residue stretch at Glu-239 to Leu-641 folds into the PPM-type phosphatase domain. Mn(2+) contacts are provided by Asp-276, Gly-277, Asp-569, and Asp-632.

It belongs to the PP2C family. The cofactor is Mg(2+). It depends on Mn(2+) as a cofactor.

It is found in the nucleus. It carries out the reaction O-phospho-L-seryl-[protein] + H2O = L-seryl-[protein] + phosphate. It catalyses the reaction O-phospho-L-threonyl-[protein] + H2O = L-threonyl-[protein] + phosphate. This Arabidopsis thaliana (Mouse-ear cress) protein is Probable protein phosphatase 2C 36 (PLL3).